The primary structure comprises 964 residues: DNA mismatch repair protein MSH2 (964 aa).

ATP is bound at residue Gly688–Ser695. An interaction with MSH6 region spans residues Asp851 to Leu964.

This sequence belongs to the DNA mismatch repair MutS family. As to quaternary structure, heterodimer consisting of MSH2-MSH6 (MutS alpha) or MSH2-MSH3 (MutS beta). Both heterodimers form a ternary complex with MutL alpha (MLH1-PMS1). MutS beta also forms a ternary complex with MutL beta (MLH1-MLH3), and possibly with a MLH1-MLH2 heterodimer. Both heterodimers interact with proliferating cell nuclear antigen (PCNA/POL30). This interaction is disrupted upon binding of the MutS heterodimers to mismatch DNA. Interacts with SAW1.

It is found in the nucleus. Inhibited by Cd(2+). Functionally, component of the post-replicative DNA mismatch repair system (MMR). Forms two different heterodimers: MutS alpha (MSH2-MSH6 heterodimer) and MutS beta (MSH2-MSH3 heterodimer), which bind to DNA mismatches thereby initiating DNA repair. MSH2 seems to act as a scaffold for the other MutS homologs that provide substrate-binding and substrate specificity. When bound, heterodimers bend the DNA helix and shield approximately 20 base pairs. MutS alpha acts mainly to repair base-base and single insertion-deletion mismatches that occur during replication, but can also repair longer insertion-deletion loops (IDLs), although with decreasing efficiency as the size of the extrahelical loop increases. MutS beta acts mainly to repair IDLs from 2 to 13 nucleotides in size, but can also repair base-base and single insertion-deletion mismatches. After mismatch binding, MutS alpha or beta form a ternary complex with a MutL heterodimer, which is thought to be responsible for directing the downstream MMR events, including strand discrimination, excision, and resynthesis. ATP binding and hydrolysis play a pivotal role in mismatch repair functions. Both subunits bind ATP, but with differing affinities, and their ATPase kinetics are also very different. MSH6 binds and hydrolyzes ATP rapidly, whereas MSH2 catalyzes ATP at a substantially slower rate. Binding to a mismatched base pair suppresses MSH6-catalyzed ATP hydrolysis, but not the activity of MSH2. ATP binding to both subunits is necessary to trigger a change in MutS alpha interaction with mismatched DNA, converting MutS alpha into a sliding clamp capable of hydrolysis-independent movement along DNA, and also facilitates formation of ternary complexes containing MutS and MutL proteins and the mismatch. MutS beta also has a role in regulation of heteroduplex formation during mitotic and meiotic recombination. MutS beta binds to DNA flap structures predicted to form during recombination, and is required for 3' non-homologous tail removal (NHTR). MutS beta-binding alters the DNA conformation of its substrate at the ds/ssDNA junction and may facilitate its recognition and/or cleavage by the downstream nucleotide excision repair (NER) RAD1-RAD10 endonuclease. This is DNA mismatch repair protein MSH2 (MSH2) from Saccharomyces cerevisiae (strain ATCC 204508 / S288c) (Baker's yeast).